Reading from the N-terminus, the 274-residue chain is 2,3,4,5-tetrahydropyridine-2,6-dicarboxylate N-succinyltransferase (274 aa).

The substrate site is built by R104 and D141.

Belongs to the transferase hexapeptide repeat family. As to quaternary structure, homotrimer.

The protein localises to the cytoplasm. The catalysed reaction is (S)-2,3,4,5-tetrahydrodipicolinate + succinyl-CoA + H2O = (S)-2-succinylamino-6-oxoheptanedioate + CoA. It functions in the pathway amino-acid biosynthesis; L-lysine biosynthesis via DAP pathway; LL-2,6-diaminopimelate from (S)-tetrahydrodipicolinate (succinylase route): step 1/3. The sequence is that of 2,3,4,5-tetrahydropyridine-2,6-dicarboxylate N-succinyltransferase from Shewanella putrefaciens (strain CN-32 / ATCC BAA-453).